The chain runs to 118 residues: Large ribosomal subunit protein uL18 (118 aa).

This sequence belongs to the universal ribosomal protein uL18 family. As to quaternary structure, part of the 50S ribosomal subunit; part of the 5S rRNA/L5/L18/L25 subcomplex. Contacts the 5S and 23S rRNAs.

In terms of biological role, this is one of the proteins that bind and probably mediate the attachment of the 5S RNA into the large ribosomal subunit, where it forms part of the central protuberance. This is Large ribosomal subunit protein uL18 from Rickettsia peacockii (strain Rustic).